Here is a 71-residue protein sequence, read N- to C-terminus: MSDKKTFEENLQELETIVSRLETGDVALEDAIAEFQKGMLISKELQRTLKEAEETLVKVMQADGTEVEMDT.

The protein belongs to the XseB family. In terms of assembly, heterooligomer composed of large and small subunits.

It localises to the cytoplasm. It carries out the reaction Exonucleolytic cleavage in either 5'- to 3'- or 3'- to 5'-direction to yield nucleoside 5'-phosphates.. In terms of biological role, bidirectionally degrades single-stranded DNA into large acid-insoluble oligonucleotides, which are then degraded further into small acid-soluble oligonucleotides. The polypeptide is Exodeoxyribonuclease 7 small subunit (Streptococcus agalactiae serotype Ia (strain ATCC 27591 / A909 / CDC SS700)).